The chain runs to 381 residues: Succinyl-diaminopimelate desuccinylase (381 aa).

Histidine 71 contacts Zn(2+). The active site involves aspartate 73. Residue aspartate 104 participates in Zn(2+) binding. The active-site Proton acceptor is glutamate 138. Zn(2+)-binding residues include glutamate 139, glutamate 167, and histidine 353.

This sequence belongs to the peptidase M20A family. DapE subfamily. In terms of assembly, homodimer. Requires Zn(2+) as cofactor. Co(2+) serves as cofactor.

The enzyme catalyses N-succinyl-(2S,6S)-2,6-diaminopimelate + H2O = (2S,6S)-2,6-diaminopimelate + succinate. Its pathway is amino-acid biosynthesis; L-lysine biosynthesis via DAP pathway; LL-2,6-diaminopimelate from (S)-tetrahydrodipicolinate (succinylase route): step 3/3. Catalyzes the hydrolysis of N-succinyl-L,L-diaminopimelic acid (SDAP), forming succinate and LL-2,6-diaminopimelate (DAP), an intermediate involved in the bacterial biosynthesis of lysine and meso-diaminopimelic acid, an essential component of bacterial cell walls. The chain is Succinyl-diaminopimelate desuccinylase from Shewanella halifaxensis (strain HAW-EB4).